Reading from the N-terminus, the 957-residue chain is UvrABC system protein A (957 aa).

33–40 (GLSGSGKS) is a binding site for ATP. The segment at 252-279 (CPQCGFSIPELEPRMFSFNSPFGACPTC) adopts a C4-type zinc-finger fold. 2 ABC transporter domains span residues 309–587 (WEPI…AKSL) and 607–935 (PNGR…KYLR). 639-646 (GVSGSGKS) is a binding site for ATP. The C4-type zinc-finger motif lies at 738-764 (CEACRGDGIIKIEMHFLPDVYVPCEVC).

It belongs to the ABC transporter superfamily. UvrA family. Forms a heterotetramer with UvrB during the search for lesions.

It localises to the cytoplasm. The UvrABC repair system catalyzes the recognition and processing of DNA lesions. UvrA is an ATPase and a DNA-binding protein. A damage recognition complex composed of 2 UvrA and 2 UvrB subunits scans DNA for abnormalities. When the presence of a lesion has been verified by UvrB, the UvrA molecules dissociate. In Halalkalibacterium halodurans (strain ATCC BAA-125 / DSM 18197 / FERM 7344 / JCM 9153 / C-125) (Bacillus halodurans), this protein is UvrABC system protein A.